A 279-amino-acid polypeptide reads, in one-letter code: Shikimate dehydrogenase (NADP(+)) (279 aa).

Shikimate contacts are provided by residues 18 to 20 (SRS) and Thr64. The active-site Proton acceptor is Lys68. Residue Glu80 coordinates NADP(+). Shikimate contacts are provided by Asn89 and Asp104. Residues 129-133 (GAGGA), 153-158 (NRTVSR), and Ile218 each bind NADP(+). Tyr220 lines the shikimate pocket. Gly241 serves as a coordination point for NADP(+).

It belongs to the shikimate dehydrogenase family. Homodimer.

The enzyme catalyses shikimate + NADP(+) = 3-dehydroshikimate + NADPH + H(+). Its pathway is metabolic intermediate biosynthesis; chorismate biosynthesis; chorismate from D-erythrose 4-phosphate and phosphoenolpyruvate: step 4/7. Involved in the biosynthesis of the chorismate, which leads to the biosynthesis of aromatic amino acids. Catalyzes the reversible NADPH linked reduction of 3-dehydroshikimate (DHSA) to yield shikimate (SA). In Chelativorans sp. (strain BNC1), this protein is Shikimate dehydrogenase (NADP(+)).